The sequence spans 22 residues: Myofibril-bound serine protease (22 aa).

The Peptidase S1 domain occupies 1–22 (IVGGYECEAYSKPYQVSINLGY).

This sequence belongs to the peptidase S1 family. Detected in skeletal muscle (at protein level).

The protein localises to the cytoplasm. Serine protease which degrades the myosin heavy chain and tropomyosin, but not actin. Selectively cleaves Arg-|-Xaa bonds. The chain is Myofibril-bound serine protease from Saurida undosquamis (Brushtooth lizardfish).